The following is a 651-amino-acid chain: Histone-lysine N-methyltransferase family member SUVH2 (651 aa).

A disordered region spans residues 1–28; the sequence is MSTLLPFPDLNLMPDSQSSTAGTTAGDT. The span at 15-28 shows a compositional bias: low complexity; it reads DSQSSTAGTTAGDT. The region spanning 202-358 is the YDG domain; the sequence is DKHIVGPVTG…KFRLVRIEGQ (157 aa). A Pre-SET domain is found at 434-492; sequence TGCECKLSCTDDCLCARKNGGEFAYDDNGHLLKGKHVVFECGEFCTCGPSCKSRVTQKG. Zn(2+) contacts are provided by Cys436, Cys438, Cys442, Cys446, Cys448, Cys474, Cys478, Cys480, and Cys484. An SET domain is found at 495-638; it reads NRLEVFRSKE…PLAELSLDYG (144 aa).

This sequence belongs to the class V-like SAM-binding methyltransferase superfamily. Histone-lysine methyltransferase family. Suvar3-9 subfamily. Self-interacts. Interacts with DNA-directed RNA polymerase V subunit NRPE1 and with DRD1 and DMS3. Binds to MORC1/CRT1. As to expression, expressed at low levels in leaves stems and flowers.

Its subcellular location is the nucleus. The protein localises to the chromosome. The protein resides in the centromere. In terms of biological role, histone methyltransferase family member that plays a central role in gene silencing. Together with MORC6 and SUVH9, regulates the silencing of some transposable elements (TEs). According to PubMed:15775980, it is required for normal methylation of 'Lys-9' and 'Lys-27' of histone H3, 'Lys-20' of H4, and cytosine, but PubMed:19043555 see no significant effect on histone methylation when the gene is mutated. According to PubMed:19043555, the protein does not bind S-adenosyl-L-methionine and lacks methyltransferase activity. Instead, it may function downstream of DRM2 in RNA-directed DNA methylation, binding to methylated DNA and recruiting DNA-directed RNA polymerase V to chromatin. The chain is Histone-lysine N-methyltransferase family member SUVH2 (SUVH2) from Arabidopsis thaliana (Mouse-ear cress).